The following is a 349-amino-acid chain: MKSTFGLLALAAAAKLVSAHATVHAVWINDVDQGAGNSADGYIRSPPNNSPITDVTSTDMTCNVNGKNPVAKTLSVKAGDKVTFEWHHDTRSDSDDIIASSHMGPVMVYMAPTEKGTAGNGWVKIAEEGYSNGKWAVANLIANRGKHSITVPDVPAGEYLLRPEIIALHEGNRQGGAQFYMECVQVKVTSAGTKTLPAGVSIPGAYKATDPGVLFDMYNSFTSYPIPGPAVWDGSSSGSSGSSGSSPATTTAPAVSVTAAPTKEAPVDTSATPTTFVTATKPATTAAPAAPSASSGSNSGSDSCNSGSASGSVKIYGQCGGQNYSGPTSCEAGLICKEWNPYYHQCVSA.

A signal peptide spans 1 to 19 (MKSTFGLLALAAAAKLVSA). 2 residues coordinate Cu(2+): histidine 20 and histidine 102. Cysteine 62 and cysteine 183 form a disulfide bridge. Residue histidine 169 coordinates O2. Tyrosine 180 contributes to the Cu(2+) binding site. The tract at residues 233–304 (DGSSSGSSGS…SGSNSGSDSC (72 aa)) is disordered. Composition is skewed to low complexity over residues 234–262 (GSSS…AAPT) and 269–304 (TSAT…SDSC). The region spanning 311–347 (GSVKIYGQCGGQNYSGPTSCEAGLICKEWNPYYHQCV) is the CBM1 domain. Disulfide bonds link cysteine 319-cysteine 336 and cysteine 330-cysteine 346. The N-linked (GlcNAc...) asparagine glycan is linked to asparagine 323.

The protein belongs to the polysaccharide monooxygenase AA9 family. Requires Cu(2+) as cofactor.

Its subcellular location is the secreted. It carries out the reaction [(1-&gt;4)-beta-D-glucosyl]n+m + reduced acceptor + O2 = 4-dehydro-beta-D-glucosyl-[(1-&gt;4)-beta-D-glucosyl]n-1 + [(1-&gt;4)-beta-D-glucosyl]m + acceptor + H2O.. Lytic polysaccharide monooxygenase (LPMO) that depolymerizes crystalline and amorphous polysaccharides via the oxidation of scissile alpha- or beta-(1-4)-glycosidic bonds, yielding C4 oxidation products. Catalysis by LPMOs requires the reduction of the active-site copper from Cu(II) to Cu(I) by a reducing agent and H(2)O(2) or O(2) as a cosubstrate. Active on cellulose and cello-oligosaccharides, as well as plant cell wall-derived hemicellulosic polysaccharides. Also active on cello-oligosaccharides such as cellohexaose, cellopentaose or cellotetraose. This Aspergillus fumigatus (strain ATCC MYA-4609 / CBS 101355 / FGSC A1100 / Af293) (Neosartorya fumigata) protein is AA9 family lytic polysaccharide monooxygenase C.